Reading from the N-terminus, the 159-residue chain is 17.7 kDa class I heat shock protein (159 aa).

The region spanning Asp45–Gly159 is the sHSP domain.

The protein belongs to the small heat shock protein (HSP20) family. In terms of assembly, may form oligomeric structures.

It localises to the cytoplasm. This chain is 17.7 kDa class I heat shock protein (HSP17.7), found in Oryza sativa subsp. japonica (Rice).